We begin with the raw amino-acid sequence, 79 residues long: Serine rich endogenous peptide 2 (79 aa).

The N-terminal stretch at M1–C19 is a signal peptide. Positions C25–N79 are disordered. The SCOOP motif motif lies at P45–F57. Over residues P45–P59 the composition is skewed to low complexity. Residues S49–S51 carry the SxS motif essential for MIK2 binding motif. Residues K60 to N79 show a composition bias toward pro residues.

It belongs to the serine rich endogenous peptide (SCOOP) phytocytokine family. Interacts with MIK2 (via extracellular leucine-rich repeat domain); this interaction triggers the formation of complex between MIK2 and the BAK1/SERK3 and SERK4 coreceptors, and subsequent BAK1 activation by phosphorylation.

The protein resides in the cell membrane. Its subcellular location is the secreted. The protein localises to the extracellular space. It localises to the apoplast. Brassicaceae-specific phytocytokine (plant endogenous peptide released into the apoplast) perceived by MIK2 in a BAK1/SERK3 and SERK4 coreceptors-dependent manner, that modulates various physiological and antimicrobial processes including growth prevention and reactive oxygen species (ROS) response regulation. The protein is Serine rich endogenous peptide 2 of Arabidopsis thaliana (Mouse-ear cress).